The chain runs to 274 residues: Urease accessory protein UreD 2 (274 aa).

The protein belongs to the UreD family. In terms of assembly, ureD, UreF and UreG form a complex that acts as a GTP-hydrolysis-dependent molecular chaperone, activating the urease apoprotein by helping to assemble the nickel containing metallocenter of UreC. The UreE protein probably delivers the nickel.

The protein resides in the cytoplasm. Its function is as follows. Required for maturation of urease via the functional incorporation of the urease nickel metallocenter. This is Urease accessory protein UreD 2 from Brucella anthropi (strain ATCC 49188 / DSM 6882 / CCUG 24695 / JCM 21032 / LMG 3331 / NBRC 15819 / NCTC 12168 / Alc 37) (Ochrobactrum anthropi).